A 157-amino-acid polypeptide reads, in one-letter code: Crossover junction endodeoxyribonuclease RuvC (157 aa).

Residues Asp-7, Glu-67, and Asp-139 contribute to the active site. 3 residues coordinate Mg(2+): Asp-7, Glu-67, and Asp-139.

It belongs to the RuvC family. In terms of assembly, homodimer which binds Holliday junction (HJ) DNA. The HJ becomes 2-fold symmetrical on binding to RuvC with unstacked arms; it has a different conformation from HJ DNA in complex with RuvA. In the full resolvosome a probable DNA-RuvA(4)-RuvB(12)-RuvC(2) complex forms which resolves the HJ. The cofactor is Mg(2+).

It is found in the cytoplasm. The enzyme catalyses Endonucleolytic cleavage at a junction such as a reciprocal single-stranded crossover between two homologous DNA duplexes (Holliday junction).. The RuvA-RuvB-RuvC complex processes Holliday junction (HJ) DNA during genetic recombination and DNA repair. Endonuclease that resolves HJ intermediates. Cleaves cruciform DNA by making single-stranded nicks across the HJ at symmetrical positions within the homologous arms, yielding a 5'-phosphate and a 3'-hydroxyl group; requires a central core of homology in the junction. The consensus cleavage sequence is 5'-(A/T)TT(C/G)-3'. Cleavage occurs on the 3'-side of the TT dinucleotide at the point of strand exchange. HJ branch migration catalyzed by RuvA-RuvB allows RuvC to scan DNA until it finds its consensus sequence, where it cleaves and resolves the cruciform DNA. In Prochlorococcus marinus (strain AS9601), this protein is Crossover junction endodeoxyribonuclease RuvC.